The primary structure comprises 430 residues: Enolase (430 aa).

A (2R)-2-phosphoglycerate-binding site is contributed by Gln-163. Glu-205 functions as the Proton donor in the catalytic mechanism. Mg(2+)-binding residues include Asp-242, Glu-288, and Asp-315. (2R)-2-phosphoglycerate contacts are provided by Lys-340, Arg-369, Ser-370, and Lys-391. The active-site Proton acceptor is Lys-340.

The protein belongs to the enolase family. Requires Mg(2+) as cofactor.

The protein resides in the cytoplasm. Its subcellular location is the secreted. It localises to the cell surface. The enzyme catalyses (2R)-2-phosphoglycerate = phosphoenolpyruvate + H2O. The protein operates within carbohydrate degradation; glycolysis; pyruvate from D-glyceraldehyde 3-phosphate: step 4/5. In terms of biological role, catalyzes the reversible conversion of 2-phosphoglycerate (2-PG) into phosphoenolpyruvate (PEP). It is essential for the degradation of carbohydrates via glycolysis. This is Enolase from Phytoplasma australiense.